The chain runs to 457 residues: NADP-specific glutamate dehydrogenase (457 aa).

The active site involves lysine 111.

Belongs to the Glu/Leu/Phe/Val dehydrogenases family. As to quaternary structure, homohexamer.

The catalysed reaction is L-glutamate + NADP(+) + H2O = 2-oxoglutarate + NH4(+) + NADPH + H(+). The protein is NADP-specific glutamate dehydrogenase (gdhA) of Agaricus bisporus (White button mushroom).